The sequence spans 78 residues: Acyl carrier protein (78 aa).

In terms of domain architecture, Carrier spans 2-77 (SDIEARVKKI…NAIDYANTHQ (76 aa)). Serine 37 carries the O-(pantetheine 4'-phosphoryl)serine modification.

The protein belongs to the acyl carrier protein (ACP) family. In terms of processing, 4'-phosphopantetheine is transferred from CoA to a specific serine of apo-ACP by AcpS. This modification is essential for activity because fatty acids are bound in thioester linkage to the sulfhydryl of the prosthetic group.

It localises to the cytoplasm. It participates in lipid metabolism; fatty acid biosynthesis. Functionally, carrier of the growing fatty acid chain in fatty acid biosynthesis. The polypeptide is Acyl carrier protein (Comamonas testosteroni (Pseudomonas testosteroni)).